The primary structure comprises 1627 residues: Type III effector DspE (1627 aa).

2 stretches are compositionally biased toward polar residues: residues 22 to 44 (AKTSLSQGNSTSASQKGAQSLIQ) and 59 to 74 (GNGSSVRSQDSRSTTL). Disordered regions lie at residues 22–102 (AKTS…GPIQ) and 436–464 (QTQALATDRQGQKHVAPLGQNGLSPTPGW). 3 short sequence motifs (wxxxE) span residues 464 to 468 (WNLSD), 514 to 520 (WEASSVE), and 660 to 667 (WQNAANHD).

The protein belongs to the AvrE family.

Its subcellular location is the secreted. It localises to the host cell. In terms of biological role, major virulence factor that may function as a water- and solute-permeable channel dedicated to creating osmotic/water potential perturbation and a water- and nutrient-rich apoplast in which bacteria multiply within the infected plant tissues. Functionally, required for plant cell death in N.benthamiana leaves and leaf cell death in S.tuberosum. Essential for pathogenicity. Does not suppress callose formation. The sequence is that of Type III effector DspE from Pectobacterium carotovorum (Erwinia carotovora).